Here is a 455-residue protein sequence, read N- to C-terminus: METEIPVNEKETSFRRRVYTTIETLIDIENTDQLQEHLPHLHCLGWDEVVEERYVNKQCGFPSCQKAPPKITRNQMFEIDRKEGKIFEFRKQRAKFCSEMCYQKSSFVRKQLDEHPLWITGLTEARTQKVYEVPDESFVSPIAEKSEPVDSQFKKEPSIWLVTDSIIAKVQDMKLSEEAEEPKSLDPEDQDIEPFKLTDDDKDFIKSIKEFRNSNFGPPSTSKLLKTAPKPVLSAKDRKKEDEVLAKLRAKYGNKNALQKKPPILIEAQEIHSKLKTMEKAKEAWLVDLIKSWFTPETRKLVREGARPTGGAAEQILMDFLSGKKVDAEKLVNLPNLDKYNVKEKRLNIFLHSIRNHWMDLEARLHLTPTRRDILSRVASTFQLDSENITGWTKREINSIVIALFIVICLVDVELGDDYFKKDNASPELTAISNELCGLDSFQITGLHAAIKSQC.

The RTR1-type zinc finger occupies 36–121 (EHLPHLHCLG…LDEHPLWITG (86 aa)). Residues Cys59, Cys64, Cys97, and Cys101 each contribute to the Zn(2+) site.

This sequence belongs to the RPAP2 family.

It localises to the nucleus. It catalyses the reaction O-phospho-L-seryl-[protein] + H2O = L-seryl-[protein] + phosphate. The catalysed reaction is O-phospho-L-threonyl-[protein] + H2O = L-threonyl-[protein] + phosphate. Putative RNA polymerase II subunit B1 C-terminal domain (CTD) phosphatase involved in RNA polymerase II transcription regulation. This chain is Putative RNA polymerase II subunit B1 CTD phosphatase rpap-2, found in Caenorhabditis elegans.